The primary structure comprises 259 residues: MGRDMDFEELNSLQGIPKMIYDELIKNKKVNTFLKMSNIMAVGRLGYNDHGKTHAKIVANNAIKMLKILYKKGIEPSFVKDCKGSFEDSLVITLLGAYLHDIGNSVHRDIHHLHSAYLALDIVENILKKYYKEEKAYQMTTEVLHAIYSHSEGIMGLTIEAGVIAVADGTDMTKGRSRIPICKKCYDIHSVSAASIERVEIKEGDEKPIQIEVILSNEAGIFQIQEVLGEKIKWSGIKNYVSVYARVEKEKPVFEEITI.

In terms of domain architecture, HD spans 51–173; that stretch reads GKTHAKIVAN…IAVADGTDMT (123 aa).

This is an uncharacterized protein from Methanocaldococcus jannaschii (strain ATCC 43067 / DSM 2661 / JAL-1 / JCM 10045 / NBRC 100440) (Methanococcus jannaschii).